Reading from the N-terminus, the 248-residue chain is Peptidyl-tRNA hydrolase (248 aa).

Y14 is a binding site for tRNA. Residue H19 is the Proton acceptor of the active site. TRNA-binding residues include F64, N66, and N112. Residues 190–248 (PRSSTGEASKGRKKAQKSEPGVAKTPAKAATPEAPAAGDIPAAPEDSRSPMQKLLDKFK) form a disordered region. Residues 212 to 226 (AKTPAKAATPEAPAA) are compositionally biased toward low complexity.

This sequence belongs to the PTH family. As to quaternary structure, monomer.

It is found in the cytoplasm. It catalyses the reaction an N-acyl-L-alpha-aminoacyl-tRNA + H2O = an N-acyl-L-amino acid + a tRNA + H(+). Functionally, hydrolyzes ribosome-free peptidyl-tRNAs (with 1 or more amino acids incorporated), which drop off the ribosome during protein synthesis, or as a result of ribosome stalling. Its function is as follows. Catalyzes the release of premature peptidyl moieties from peptidyl-tRNA molecules trapped in stalled 50S ribosomal subunits, and thus maintains levels of free tRNAs and 50S ribosomes. This Ruegeria sp. (strain TM1040) (Silicibacter sp.) protein is Peptidyl-tRNA hydrolase.